The sequence spans 334 residues: 3-dehydroquinate synthase (334 aa).

This sequence belongs to the archaeal-type DHQ synthase family.

The enzyme catalyses 2-amino-2,3,7-trideoxy-D-lyxo-hept-6-ulosonate + NAD(+) + H2O = 3-dehydroquinate + NH4(+) + NADH + H(+). Its function is as follows. Catalyzes the oxidative deamination and cyclization of 2-amino-3,7-dideoxy-D-threo-hept-6-ulosonic acid (ADH) to yield 3-dehydroquinate (DHQ), which is fed into the canonical shikimic pathway of aromatic amino acid biosynthesis. This Korarchaeum cryptofilum (strain OPF8) protein is 3-dehydroquinate synthase.